We begin with the raw amino-acid sequence, 570 residues long: MSEKHPGPLVVEGKLTDAERMKLESNYLRGTIAEDLNDGLTGGFKGDNFLLIRFHGMYQQDDRDIRAERAEQKLEPRHAMLLRCRLPGGVITTKQWQAIDKFAGENTIYGSIRLTNRQTFQFHGILKKNVKPVHQMLHSVGLDALATANDMNRNVLCTSNPYESQLHAEAYEWAKKISEHLLPRTRAYAEIWLDQEKVATTDEEPILGQTYLPRKFKTTVVIPPQNDIDLHANDMNFVAIAENGKLVGFNLLVGGGLSIEHGNKKTYARTASEFGYLPLEHTLAVAEAVVTTQRDWGNRTDRKNAKTKYTLERVGVETFKAEVERRAGIKFEPIRPYEFTGRGDRIGWVKGIDDNWHLTLFIENGRILDYPARPLKTGLLEIAKIHKGDFRITANQNLIIAGVPESEKAKIEKIAKESGLMNAVTPQRENSMACVSFPTCPLAMAEAERFLPSFIDNIDNLMAKHGVSDEHIVMRVTGCPNGCGRAMLAEVGLVGKAPGRYNLHLGGNRIGTRIPRMYKENITEPEILASLDELIGRWAKEREAGEGFGDFTVRAGIIRPVLDPARDLWD.

Residues Cys434, Cys440, Cys479, and Cys483 each coordinate [4Fe-4S] cluster. Cys483 lines the siroheme pocket.

Belongs to the nitrite and sulfite reductase 4Fe-4S domain family. In terms of assembly, alpha(8)-beta(8). The alpha component is a flavoprotein, the beta component is a hemoprotein. Requires siroheme as cofactor. [4Fe-4S] cluster serves as cofactor.

It catalyses the reaction hydrogen sulfide + 3 NADP(+) + 3 H2O = sulfite + 3 NADPH + 4 H(+). Its pathway is sulfur metabolism; hydrogen sulfide biosynthesis; hydrogen sulfide from sulfite (NADPH route): step 1/1. Functionally, component of the sulfite reductase complex that catalyzes the 6-electron reduction of sulfite to sulfide. This is one of several activities required for the biosynthesis of L-cysteine from sulfate. The chain is Sulfite reductase [NADPH] hemoprotein beta-component from Escherichia coli (strain B / BL21-DE3).